Here is a 59-residue protein sequence, read N- to C-terminus: Putative movement protein p6.6 (59 aa).

The helical transmembrane segment at 13 to 35 (RVGPLLVLCLLLLLILFSRSWNV) threads the bilayer.

It localises to the membrane. Functionally, cell-to-cell movement. This chain is Putative movement protein p6.6, found in Panicum mosaic virus (strain United States/Kansas 109S) (PMV).